Here is a 106-residue protein sequence, read N- to C-terminus: Putative membrane protein insertion efficiency factor (106 aa).

This sequence belongs to the UPF0161 family.

The protein localises to the cell inner membrane. Could be involved in insertion of integral membrane proteins into the membrane. The chain is Putative membrane protein insertion efficiency factor from Acinetobacter baumannii (strain AB307-0294).